The chain runs to 270 residues: Orotidine 5'-phosphate decarboxylase (270 aa).

The active-site Proton donor is the Lys-95.

The protein belongs to the OMP decarboxylase family. Type 2 subfamily.

It carries out the reaction orotidine 5'-phosphate + H(+) = UMP + CO2. Its pathway is pyrimidine metabolism; UMP biosynthesis via de novo pathway; UMP from orotate: step 2/2. The chain is Orotidine 5'-phosphate decarboxylase from Azoarcus sp. (strain BH72).